A 983-amino-acid chain; its full sequence is Receptor-type tyrosine-protein phosphatase-like N (983 aa).

The first 40 residues, 1–40, serve as a signal peptide directing secretion; it reads MRRPRRPGGPAGCGGSEGSGGLRLLVCLLLLSGRPGGCSA. An RESP18 homology domain region spans residues 41-137; sequence ISAHGCLFDR…HPRDRSGSVP (97 aa). Over 41 to 579 the chain is Lumenal; that stretch reads ISAHGCLFDR…RQAHGISPMR (539 aa). The cysteines at positions 59 and 68 are disulfide-linked. The span at 118–133 shows a compositional bias: basic and acidic residues; it reads RIPRLRPPEPHPRDRS. 3 disordered regions span residues 118–179, 293–330, and 399–420; these read RIPR…SPLS, RARA…SPPQ, and GDTA…ASST. Over residues 148–158 the composition is skewed to polar residues; the sequence is SQGNPTGSSPA. Positions 307 to 326 are enriched in basic and acidic residues; sequence RAEDSSEGHEEEVLGGHGEK. A phosphoserine mark is found at Ser311 and Ser312. The sufficient for dimerization of proICA512 stretch occupies residues 453–579; it reads SPLGQSQPTV…RQAHGISPMR (127 aa). 2 N-linked (GlcNAc...) asparagine glycosylation sites follow: Asn510 and Asn528. The helical transmembrane segment at 580–604 threads the bilayer; the sequence is SLLLTLVALAGVAGLLVALAVALCM. Residues 605–736 form a sufficient for dimerization of proICA512 region; that stretch reads RHHSKQRDKE…PNTCATAQGE (132 aa). Over 605 to 983 the chain is Cytoplasmic; sequence RHHSKQRDKE…VNAILKALPQ (379 aa). Positions 648–684 are disordered; it reads RAEGQPEPSRVSSVSSQFSDAAQASPSSHSSTPSWCE. Low complexity predominate over residues 652–681; the sequence is QPEPSRVSSVSSQFSDAAQASPSSHSSTPS. Positions 713–973 constitute a Tyrosine-protein phosphatase domain; sequence LAKEWQALCA…EFALTAVAEE (261 aa). Lys758 participates in a covalent cross-link: Glycyl lysine isopeptide (Lys-Gly) (interchain with G-Cter in SUMO).

The protein belongs to the protein-tyrosine phosphatase family. Receptor class 8 subfamily. Homodimer; shown for the unprocessed protein (proICA512) in the endoplasmic reticulum and resolved during protein maturation as ICA512-TMF seems to be predominantly monomeric in secretory granules; however, ICA512-CCF interacts with ICA512-TMF disrupting the ICA512-TMF:SNTB2 complex. The isolated lumenal RESP18 homology domain has been shown to form disulfide-linked homooligomers. Interacts (via cytoplasmic domain) with phosphorylated SNTB2; this protects PTPRN against cleavage by CAPN1 to produce ICA512-CCF. Dephosphorylation of SNTB2 upon insulin stimulation disrupts the interaction and results in PTPRN cleavage. Interacts with SNX19. ICA512-CCF interacts with PIAS4; in the nucleus. Interacts with STAT5B (phosphorylated); down-regulated by ICA512-CCF sumoylation; ICA512-CCF prevents STAT5B dephosphorylation; ICA512-CCF mediates interaction of STAT5B with PIAS4. Interacts (via RESP18 homology domain) with insulin and proinsulin. Interacts with PTPRN2, PTPRA and PTPRE. In terms of processing, subject to proteolytic cleavage at multiple sites. Subject to cleavage on a pair of basic residues. Following exocytosis of secretory granules in pancreatic beta-cells ICA512-TMF located in the plasma-membrane is cleaved by mu-type calpain CPN1 to yield ICA512-CCF. Post-translationally, N-glycosylated. O-glycosylated. In terms of processing, sumoylated at two sites including Lys-758. Sumoylation decreases interaction with STAT5. In terms of tissue distribution, detected in pancreas islets. Detected in pancreas alpha, beta and delta cells, and in chromaffin cells in the adrenal medulla. Detected in amygdala, hypothalamus, autonomous nerve fibers and ganglia, especially at synaptic contacts. Detected in pituitary (at protein level). Detected in brain, specifically in cerebral cortex, diencephalon and brain stem.

The protein resides in the membrane. The protein localises to the cytoplasmic vesicle. It localises to the secretory vesicle membrane. It is found in the perikaryon. Its subcellular location is the cell projection. The protein resides in the axon. The protein localises to the synapse. It localises to the cell membrane. It is found in the endosome. Its subcellular location is the nucleus. Plays a role in vesicle-mediated secretory processes. Required for normal accumulation of secretory vesicles in hippocampus, pituitary and pancreatic islets. Required for the accumulation of normal levels of insulin-containing vesicles and preventing their degradation. Plays a role in insulin secretion in response to glucose stimuli. Required for normal accumulation of the neurotransmitters norepinephrine, dopamine and serotonin in the brain. In females, but not in males, required for normal accumulation and secretion of pituitary hormones, such as luteinizing hormone (LH) and follicle-stimulating hormone (FSH). Required to maintain normal levels of renin expression and renin release. Seems to lack intrinsic enzyme activity. Functionally, ICA512-TMF regulates dynamics and exocytosis of insulin secretory granules (SGs); binding of ICA512-TMF to SNTB2/beta-2-syntrophin is proposed to restrain SGs mobility and exocytosis by tethering them to the actin cytoskeleton depending on UTRN; the function is inhibited by cytoplasmic ICA512-CFF dimerizing with ICA512-TMF and displacing SNTB2. Its function is as follows. ICA512-CCF translocated to the nucleus promotes expression of insulin and other granule-related genes; the function implicates binding to and regulating activity of STAT5B probably by preventing its dephosphorylation and potentially by inducing its sumoylation by recruiting PIAS4. Enhances pancreatic beta-cell proliferation by converging with signaling by STAT5B and STAT3. ICA512-CCF located in the cytoplasm regulates dynamics and exocytosis of insulin secretory granules (SGs) by dimerizing with ICA512-TMF and displacing SNTB2 thus enhancing SGs mobility and exocytosis. This chain is Receptor-type tyrosine-protein phosphatase-like N (Ptprn), found in Rattus norvegicus (Rat).